We begin with the raw amino-acid sequence, 386 residues long: Lipid-A-disaccharide synthase (386 aa).

This sequence belongs to the LpxB family.

The enzyme catalyses a lipid X + a UDP-2-N,3-O-bis[(3R)-3-hydroxyacyl]-alpha-D-glucosamine = a lipid A disaccharide + UDP + H(+). It participates in bacterial outer membrane biogenesis; LPS lipid A biosynthesis. Functionally, condensation of UDP-2,3-diacylglucosamine and 2,3-diacylglucosamine-1-phosphate to form lipid A disaccharide, a precursor of lipid A, a phosphorylated glycolipid that anchors the lipopolysaccharide to the outer membrane of the cell. This is Lipid-A-disaccharide synthase from Chromohalobacter salexigens (strain ATCC BAA-138 / DSM 3043 / CIP 106854 / NCIMB 13768 / 1H11).